A 433-amino-acid chain; its full sequence is MGTFKIYPGKLKGEVKIPPSKSMAHRGVICAALGDGISKIRNINYSDDIRATINAMRSLGAIITKEDEYLHIIGIKSEKCKKNIELNRTIDCNESGSTLRFLVPISCIFEGSSRFIGKGNLGKRPLDTYYEIFDNQGIKYSYKKGKLDLRIQGILKYGEFKLRGDISSQFISGMLFTLPLLEGDSKIIITTELESKGYIDLTLSAMSDFGIEIINNNYREFIIKGNQTYKSIDYRIEGDYSQAAFFLVADALKSEVFINDLKLESLQGDKEVIEILERMNMKIKNIDNSLLGIPRENLEATIIDGSQCPDIIPVISLAASLCNGRTEIINVGRLRIKECDRLSAVASELNKLGANIIEKEDSLIIDGVKTLKGGVKVWSHKDHRIAMMLAIASTVCMEPIILEDYECISKSYPEFFDDFKALGGNFHEWNLGE.

Residues K21, S22, and R26 each contribute to the 3-phosphoshikimate site. K21 is a phosphoenolpyruvate binding site. G96 and R124 together coordinate phosphoenolpyruvate. 3-phosphoshikimate contacts are provided by S167, S168, Q169, S195, D310, and K337. A phosphoenolpyruvate-binding site is contributed by Q169. The active-site Proton acceptor is D310. Residues R341, R384, and K410 each contribute to the phosphoenolpyruvate site.

The protein belongs to the EPSP synthase family. As to quaternary structure, monomer.

The protein localises to the cytoplasm. The catalysed reaction is 3-phosphoshikimate + phosphoenolpyruvate = 5-O-(1-carboxyvinyl)-3-phosphoshikimate + phosphate. It participates in metabolic intermediate biosynthesis; chorismate biosynthesis; chorismate from D-erythrose 4-phosphate and phosphoenolpyruvate: step 6/7. Functionally, catalyzes the transfer of the enolpyruvyl moiety of phosphoenolpyruvate (PEP) to the 5-hydroxyl of shikimate-3-phosphate (S3P) to produce enolpyruvyl shikimate-3-phosphate and inorganic phosphate. This Clostridium botulinum (strain Alaska E43 / Type E3) protein is 3-phosphoshikimate 1-carboxyvinyltransferase.